Here is a 592-residue protein sequence, read N- to C-terminus: MKILIILLVFLNLITNINCAVCSSRLQVSDIKFANTHVLPIEGKSWKNNTVTLKILPNRESLLLAKFQDQTLSYTVKVWVDDSLMGKLTLNDPSKLPPTESNGTKYSTVHHSIRIPKDWMKPKMKIQFSTMLLKSEFFFPNIGHETNLNMWLLPFYLFGANDTNTQPLSVTGSISKDVSDELIQKWSLSSLNALNHPISRIDWSYLILPAGRNNLPGLRITNSDQKRDGYEIMSVVLGILSGIRGANGEGPSSVLYYAPLIHLGANGKYADPWGGLGGGSVGTGDYSYTGIFIHEAGHSYGLPHAGDSYKSGNYPYVDGSLLGSEWGFDMNHNEFLSVNIPSNIGAYKNCNKSFILDQNKNCVKQSVMQGGAGNQAQGYRYSMFADYEEVTIQNYFKDSIIYDKSFSTGYKKWNTTTLKYETYTPSTKSNGLYGINDGLPIERNVDVYTIIITHSFVGPANLSQIYPIFKSKGNLMPFFDPTNSTQLVDIRPNVSKYAWYCHANGCDYTIKITYTDGTTKYMLLQRGKRSWFSPSGAIGSGFTDPLSGESSLSVIFNIKADKTPSKIELFETLLGFNGFNSTTATLLVSQSF.

The N-terminal stretch at 1 to 19 is a signal peptide; that stretch reads MKILIILLVFLNLITNINC. The Peptidase M66 domain maps to 140–402; sequence PNIGHETNLN…QNYFKDSIIY (263 aa). Zn(2+) is bound at residue His-294. Glu-295 is a catalytic residue. Zn(2+) is bound by residues His-298 and His-304.

It belongs to the dictomallein family. It depends on Zn(2+) as a cofactor.

The protein localises to the secreted. This Dictyostelium discoideum (Social amoeba) protein is Dictomallein-1 (dtmlA).